A 538-amino-acid chain; its full sequence is Interleukin-21 receptor (538 aa).

The N-terminal stretch at 1–19 (MPRGWAAPLLLLLLQGGWG) is a signal peptide. 3 cysteine pairs are disulfide-bonded: cysteine 20–cysteine 109, cysteine 25–cysteine 35, and cysteine 65–cysteine 81. The Extracellular segment spans residues 20-232 (CPDLVCYTDY…FQTQSEELKE (213 aa)). Fibronectin type-III domains lie at 21 to 118 (PDLV…AESI) and 119 to 228 (KPAP…TQSE). N-linked (GlcNAc...) asparagine glycosylation is found at asparagine 73, asparagine 97, asparagine 104, asparagine 125, and asparagine 135. A C-linked (Man) tryptophan glycan is attached at tryptophan 214. A WSXWS motif motif is present at residues 214-218 (WSEWS). A helical transmembrane segment spans residues 233–253 (GWNPHLLLLLLLVIVFIPAFW). Residues 254-538 (SLKTHPLWRL…PLSSPGPQAS (285 aa)) are Cytoplasmic-facing. Residues 266–274 (KIWAVPSPE) carry the Box 1 motif motif. Disordered stretches follow at residues 342–367 (ESDG…SEER) and 457–487 (EDWA…GLDM).

The protein belongs to the type I cytokine receptor family. Type 4 subfamily. Heterodimer with the common gamma subunit. Associates with JAK1. In terms of processing, C-mannosylated at Trp-214 in the WSXWS motif, the sugar chain makes extensive hydrogen bonds with Asn-73 sugar, and bridges the two fibronectin domains transforming the V-shaped receptor into an A-frame. As to expression, selectively expressed in lymphoid tissues. Most highly expressed in thymus and spleen.

The protein localises to the membrane. Functionally, this is a receptor for interleukin-21. The chain is Interleukin-21 receptor (IL21R) from Homo sapiens (Human).